The following is a 478-amino-acid chain: Chromosomal replication initiator protein DnaA (478 aa).

Positions Met-1–Arg-71 are domain I, interacts with DnaA modulators. The domain II stretch occupies residues Arg-71–Ser-140. The segment at Arg-141–Ala-357 is domain III, AAA+ region. Residues Gly-185, Gly-187, Lys-188, and Thr-189 each coordinate ATP. Positions Arg-358–Gly-478 are domain IV, binds dsDNA.

This sequence belongs to the DnaA family. Oligomerizes as a right-handed, spiral filament on DNA at oriC.

Its subcellular location is the cytoplasm. In terms of biological role, plays an essential role in the initiation and regulation of chromosomal replication. ATP-DnaA binds to the origin of replication (oriC) to initiate formation of the DNA replication initiation complex once per cell cycle. Binds the DnaA box (a 9 base pair repeat at the origin) and separates the double-stranded (ds)DNA. Forms a right-handed helical filament on oriC DNA; dsDNA binds to the exterior of the filament while single-stranded (ss)DNA is stabiized in the filament's interior. The ATP-DnaA-oriC complex binds and stabilizes one strand of the AT-rich DNA unwinding element (DUE), permitting loading of DNA polymerase. After initiation quickly degrades to an ADP-DnaA complex that is not apt for DNA replication. Binds acidic phospholipids. In Bordetella petrii (strain ATCC BAA-461 / DSM 12804 / CCUG 43448), this protein is Chromosomal replication initiator protein DnaA.